A 118-amino-acid chain; its full sequence is Ribonuclease P protein component (118 aa).

The protein belongs to the RnpA family. As to quaternary structure, consists of a catalytic RNA component (M1 or rnpB) and a protein subunit.

The catalysed reaction is Endonucleolytic cleavage of RNA, removing 5'-extranucleotides from tRNA precursor.. Functionally, RNaseP catalyzes the removal of the 5'-leader sequence from pre-tRNA to produce the mature 5'-terminus. It can also cleave other RNA substrates such as 4.5S RNA. The protein component plays an auxiliary but essential role in vivo by binding to the 5'-leader sequence and broadening the substrate specificity of the ribozyme. This is Ribonuclease P protein component from Shewanella baltica (strain OS155 / ATCC BAA-1091).